Consider the following 625-residue polypeptide: Phosphomethylpyrimidine synthase (625 aa).

Residues Asn237, Met266, Tyr295, His331, 351–353 (SRG), 392–395 (DGLR), and Glu431 each bind substrate. His435 lines the Zn(2+) pocket. Tyr458 is a binding site for substrate. His499 is a binding site for Zn(2+). [4Fe-4S] cluster contacts are provided by Cys579, Cys582, and Cys587.

Belongs to the ThiC family. Homodimer. [4Fe-4S] cluster serves as cofactor.

It carries out the reaction 5-amino-1-(5-phospho-beta-D-ribosyl)imidazole + S-adenosyl-L-methionine = 4-amino-2-methyl-5-(phosphooxymethyl)pyrimidine + CO + 5'-deoxyadenosine + formate + L-methionine + 3 H(+). It participates in cofactor biosynthesis; thiamine diphosphate biosynthesis. Its function is as follows. Catalyzes the synthesis of the hydroxymethylpyrimidine phosphate (HMP-P) moiety of thiamine from aminoimidazole ribotide (AIR) in a radical S-adenosyl-L-methionine (SAM)-dependent reaction. This is Phosphomethylpyrimidine synthase from Cupriavidus metallidurans (strain ATCC 43123 / DSM 2839 / NBRC 102507 / CH34) (Ralstonia metallidurans).